A 640-amino-acid polypeptide reads, in one-letter code: PTS system mannitol-specific EIICBA component (640 aa).

Residues 12–343 form the PTS EIIC type-2 domain; the sequence is LGRFLSAMIM…LKISNRNHYV (332 aa). Transmembrane regions (helical) follow at residues 24-45, 50-70, 134-155, 165-185, 273-292, and 313-334; these read ISVF…WCPN, KVLS…TGGY, SVGI…PMIE, VNLM…EPAK, LILG…GGLI, and VINL…CMLL. In terms of domain architecture, PTS EIIB type-2 spans 379-475; sequence RNIIFACDAG…YLVENNLDNN (97 aa). Cys385 (phosphocysteine intermediate; for EIIB activity) is an active-site residue. Cys385 bears the Phosphocysteine; by EIIA mark. The PTS EIIA type-2 domain maps to 496-638; the sequence is FSLTKENIFL…DDVLYLFSRK (143 aa). The active-site Tele-phosphohistidine intermediate; for EIIA activity is His556. Position 556 is a phosphohistidine; by HPr (His556).

Homodimer. An intramolecular phosphotransfer takes places between His-556 and Cys-385.

It localises to the cell inner membrane. The enzyme catalyses D-mannitol(out) + N(pros)-phospho-L-histidyl-[protein] = D-mannitol 1-phosphate(in) + L-histidyl-[protein]. The phosphoenolpyruvate-dependent sugar phosphotransferase system (sugar PTS), a major carbohydrate active transport system, catalyzes the phosphorylation of incoming sugar substrates concomitantly with their translocation across the cell membrane. This system is involved in D-mannitol transport. This is PTS system mannitol-specific EIICBA component (mtlA) from Buchnera aphidicola subsp. Baizongia pistaciae (strain Bp).